The chain runs to 581 residues: Kelch-like protein 30 (581 aa).

The 68-residue stretch at 33–100 (ADVTLLVGDQ…VYTGRLTITQ (68 aa)) folds into the BTB domain. In terms of domain architecture, BACK spans 135 to 237 (CLGICEFGEQ…PRPCVQQLLA (103 aa)). Kelch repeat units lie at residues 280–327 (EEDE…ALNS), 328–378 (DVYV…ALNG), 379–423 (EIYA…GCQG), 425–472 (LYLV…ALNG), 474–514 (LYLI…PLGD), and 515–564 (LLYV…TIFL).

This is Kelch-like protein 30 (Klhl30) from Mus musculus (Mouse).